The sequence spans 590 residues: Protein I'm not dead yet (590 aa).

11 helical membrane passes run Gly43–Ala63, Ala82–Met102, Thr115–His135, Leu153–Cys173, Leu224–Gly244, Thr270–Leu290, Leu329–Met349, Ser373–Leu393, Val457–Phe477, Ala509–Val529, and Met540–Gln560.

Belongs to the SLC13A/DASS transporter (TC 2.A.47) family. NADC subfamily. In adults, abundantly expressed in the fat body, basolateral region of midgut cells and oenocytes. Low level expression is seen in the halteres, procardia, restricted regions of the esophagus and hindgut, base of the legs and in a subset of cells in the third segment of the antennae.

The protein localises to the basolateral cell membrane. Its function is as follows. Cation-independent electroneutral transporter (not associated with membrane depolarization) of a variety of tricarboxylic and dicarboxylic acid-cycle intermediates. There is also small, but detectable, transport of monocarboxylics. Transport is through the epithelium of the gut and across the plasma membranes of organs involved in intermediary metabolism and storage. Affinity for substrates is citrate &gt; succinate &gt; pyruvate. Fumarate, a-ketoglutarate, and glutarate are also transported, but not lactate. Transport mechanism that is not coupled to Na(+), K(+), or Cl(-). Function is shown in Xenopus oocytes and human retinal pigment epithelial (HRPE) cell lines. The protein is Protein I'm not dead yet (Indy) of Drosophila melanogaster (Fruit fly).